The primary structure comprises 78 residues: Large ribosomal subunit protein bL28 (78 aa).

Residues 1 to 21 (MSRVCQVTGKRPVSGNNRSHA) form a disordered region.

Belongs to the bacterial ribosomal protein bL28 family.

The polypeptide is Large ribosomal subunit protein bL28 (Serratia proteamaculans (strain 568)).